Consider the following 214-residue polypeptide: MNLILLGPPGVGKGTQAKLLIDRFGIPQISTGDILRAAVKELTPMGAKAKGYMDSGALVPDEVVIGIVEERLAQADCQKGFILDGFPRTVPQADALGQVLSGMGKSIDHVVSLSVDKGELLKRLTGRRACANCGAGYHVDFAPSKVAGVCDACSGQLVQREDDKEETILNRLAVYEAQTAPLIAYYQAAGLLRSVDGLGTVEGVQSGILAAIRA.

10–15 (GVGKGT) lines the ATP pocket. The tract at residues 30-59 (STGDILRAAVKELTPMGAKAKGYMDSGALV) is NMP. AMP-binding positions include T31, R36, 57-59 (ALV), 85-88 (GFPR), and Q92. An LID region spans residues 126–163 (GRRACANCGAGYHVDFAPSKVAGVCDACSGQLVQREDD). Position 127 (R127) interacts with ATP. The Zn(2+) site is built by C130, C133, C150, and C153. The AMP site is built by R160 and R171. G199 is a binding site for ATP.

Belongs to the adenylate kinase family. In terms of assembly, monomer.

Its subcellular location is the cytoplasm. It carries out the reaction AMP + ATP = 2 ADP. It functions in the pathway purine metabolism; AMP biosynthesis via salvage pathway; AMP from ADP: step 1/1. Its function is as follows. Catalyzes the reversible transfer of the terminal phosphate group between ATP and AMP. Plays an important role in cellular energy homeostasis and in adenine nucleotide metabolism. The polypeptide is Adenylate kinase (Citrifermentans bemidjiense (strain ATCC BAA-1014 / DSM 16622 / JCM 12645 / Bem) (Geobacter bemidjiensis)).